The primary structure comprises 460 residues: Phosphomethylpyrimidine synthase (460 aa).

Substrate-binding positions include N80, M109, Y139, H175, 195–197 (SRG), 236–239 (DSLR), and E275. H279 is a binding site for Zn(2+). Y302 is a binding site for substrate. H343 is a Zn(2+) binding site. 3 residues coordinate [4Fe-4S] cluster: C423, C426, and C431.

This sequence belongs to the ThiC family. [4Fe-4S] cluster is required as a cofactor.

The enzyme catalyses 5-amino-1-(5-phospho-beta-D-ribosyl)imidazole + S-adenosyl-L-methionine = 4-amino-2-methyl-5-(phosphooxymethyl)pyrimidine + CO + 5'-deoxyadenosine + formate + L-methionine + 3 H(+). It participates in cofactor biosynthesis; thiamine diphosphate biosynthesis. Functionally, catalyzes the synthesis of the hydroxymethylpyrimidine phosphate (HMP-P) moiety of thiamine from aminoimidazole ribotide (AIR) in a radical S-adenosyl-L-methionine (SAM)-dependent reaction. This chain is Phosphomethylpyrimidine synthase, found in Rippkaea orientalis (strain PCC 8801 / RF-1) (Cyanothece sp. (strain PCC 8801)).